We begin with the raw amino-acid sequence, 189 residues long: Shikimate kinase (189 aa).

Residue 22–27 (ASGKST) participates in ATP binding. Serine 26 contacts Mg(2+). The substrate site is built by aspartate 44, arginine 68, and glycine 90. Arginine 128 is an ATP binding site. Arginine 147 serves as a coordination point for substrate.

The protein belongs to the shikimate kinase family. In terms of assembly, monomer. The cofactor is Mg(2+).

It localises to the cytoplasm. The enzyme catalyses shikimate + ATP = 3-phosphoshikimate + ADP + H(+). It participates in metabolic intermediate biosynthesis; chorismate biosynthesis; chorismate from D-erythrose 4-phosphate and phosphoenolpyruvate: step 5/7. Functionally, catalyzes the specific phosphorylation of the 3-hydroxyl group of shikimic acid using ATP as a cosubstrate. In Synechococcus sp. (strain JA-3-3Ab) (Cyanobacteria bacterium Yellowstone A-Prime), this protein is Shikimate kinase.